Here is a 535-residue protein sequence, read N- to C-terminus: MSLSLDFNWRYVYLIAIGLKFVLALSNSYIHPDEHFQSFEVLTNKIFSFTTTTPWEFSSDTPARSFGPLYLFYAPLLYSIKLVGYELSPLQIWYMARLQNVLIGWVITDMCIYRLLPTKPERIKGLFYTSTSYITLVYQSHCFSNSIETWLVLICVLVINDLRFIQESNVPELQSQRQYQKLFWFGALVSIGIFNRITFPAFLALPSLYLMKYFRHNKMSAIFSLLGFMLPTIAIILLDTFEFNGSIDDILKHPLDFNSYVITPLNNLIYNSKVENLSNHGLHPYYTHLLVNLPQILGPGLFFMVSNFKNQYWKTTPFLAVISGVSVLSLIPHQELRFLIPIVPLVCCCFDLKNISSASKGERITKAPPMVSVLMNLWYLFNILLAVLMGVYHQGGIVPALDYFHSNIFQENSRQSVQIWWRTYSPPPWILGDKLDTLQVLTVTDDSPQFELDSSKSNYLIDAMGSDYTHVSKLIESFKDFSGSIYLIAPIASIRKHYDISMHQVWNYTHHLDLDHIDFSDFQSLKPGLGIYELL.

Over 1–10 (MSLSLDFNWR) the chain is Cytoplasmic. Residues 11-31 (YVYLIAIGLKFVLALSNSYIH) form a helical membrane-spanning segment. At 32–91 (PDEHFQSFEVLTNKIFSFTTTTPWEFSSDTPARSFGPLYLFYAPLLYSIKLVGYELSPLQ) the chain is on the lumenal side. The helical transmembrane segment at 92–112 (IWYMARLQNVLIGWVITDMCI) threads the bilayer. Topologically, residues 113-141 (YRLLPTKPERIKGLFYTSTSYITLVYQSH) are cytoplasmic. The helical transmembrane segment at 142–162 (CFSNSIETWLVLICVLVINDL) threads the bilayer. Topologically, residues 163–181 (RFIQESNVPELQSQRQYQK) are lumenal. The helical transmembrane segment at 182-202 (LFWFGALVSIGIFNRITFPAF) threads the bilayer. Topologically, residues 203–220 (LALPSLYLMKYFRHNKMS) are cytoplasmic. The helical transmembrane segment at 221 to 241 (AIFSLLGFMLPTIAIILLDTF) threads the bilayer. The Lumenal portion of the chain corresponds to 242 to 284 (EFNGSIDDILKHPLDFNSYVITPLNNLIYNSKVENLSNHGLHP). Residues asparagine 244 and asparagine 276 are each glycosylated (N-linked (GlcNAc...) asparagine). A helical membrane pass occupies residues 285–305 (YYTHLLVNLPQILGPGLFFMV). The Cytoplasmic portion of the chain corresponds to 306–311 (SNFKNQ). The chain crosses the membrane as a helical span at residues 312 to 332 (YWKTTPFLAVISGVSVLSLIP). At 333 to 337 (HQELR) the chain is on the lumenal side. The chain crosses the membrane as a helical span at residues 338 to 358 (FLIPIVPLVCCCFDLKNISSA). The Cytoplasmic portion of the chain corresponds to 359–370 (SKGERITKAPPM). The chain crosses the membrane as a helical span at residues 371 to 391 (VSVLMNLWYLFNILLAVLMGV). The Lumenal portion of the chain corresponds to 392 to 535 (YHQGGIVPAL…KPGLGIYELL (144 aa)). Asparagine 507 carries an N-linked (GlcNAc...) asparagine glycan.

It belongs to the glycosyltransferase 22 family. PIGZ subfamily.

The protein localises to the endoplasmic reticulum membrane. Its pathway is glycolipid biosynthesis; glycosylphosphatidylinositol-anchor biosynthesis. In terms of biological role, alpha-1,2-mannosyltransferase involved in glycosylphosphatidylinositol-anchor biosynthesis. Transfers a fourth mannose to trimannosyl-GPIs during GPI precursor assembly. The presence of a fourth mannose in GPI is essential in fungi. This Debaryomyces hansenii (strain ATCC 36239 / CBS 767 / BCRC 21394 / JCM 1990 / NBRC 0083 / IGC 2968) (Yeast) protein is GPI mannosyltransferase 4 (SMP3).